The sequence spans 306 residues: Agmatinase (306 aa).

Mn(2+) is bound by residues H126, D149, H151, D153, D230, and D232.

It belongs to the arginase family. Agmatinase subfamily. Mn(2+) is required as a cofactor.

The enzyme catalyses agmatine + H2O = urea + putrescine. It functions in the pathway amine and polyamine biosynthesis; putrescine biosynthesis via agmatine pathway; putrescine from agmatine: step 1/1. Functionally, catalyzes the formation of putrescine from agmatine. The protein is Agmatinase of Escherichia coli (strain SE11).